Here is a 228-residue protein sequence, read N- to C-terminus: 2-C-methyl-D-erythritol 4-phosphate cytidylyltransferase (228 aa).

Belongs to the IspD/TarI cytidylyltransferase family. IspD subfamily.

It catalyses the reaction 2-C-methyl-D-erythritol 4-phosphate + CTP + H(+) = 4-CDP-2-C-methyl-D-erythritol + diphosphate. Its pathway is isoprenoid biosynthesis; isopentenyl diphosphate biosynthesis via DXP pathway; isopentenyl diphosphate from 1-deoxy-D-xylulose 5-phosphate: step 2/6. Functionally, catalyzes the formation of 4-diphosphocytidyl-2-C-methyl-D-erythritol from CTP and 2-C-methyl-D-erythritol 4-phosphate (MEP). In Actinobacillus pleuropneumoniae serotype 5b (strain L20), this protein is 2-C-methyl-D-erythritol 4-phosphate cytidylyltransferase.